The primary structure comprises 458 residues: RuvB-like helicase 1 (458 aa).

71-78 (GGPGTGKT) contacts ATP.

This sequence belongs to the RuvB family. May form heterododecamers with RVB2. Component of the SWR1 chromatin remodeling complex, the INO80 chromatin remodeling complex, and of the R2TP complex.

It localises to the nucleus. The catalysed reaction is ATP + H2O = ADP + phosphate + H(+). In terms of biological role, DNA helicase which participates in several chromatin remodeling complexes, including the SWR1 and the INO80 complexes. The SWR1 complex mediates the ATP-dependent exchange of histone H2A for the H2A variant HZT1 leading to transcriptional regulation of selected genes by chromatin remodeling. The INO80 complex remodels chromatin by shifting nucleosomes and is involved in DNA repair. Also involved in pre-rRNA processing. This Gibberella zeae (strain ATCC MYA-4620 / CBS 123657 / FGSC 9075 / NRRL 31084 / PH-1) (Wheat head blight fungus) protein is RuvB-like helicase 1 (RVB1).